Here is a 338-residue protein sequence, read N- to C-terminus: UDP-glucose 4-epimerase (338 aa).

Residues 11–12 (YI), 31–36 (DNLCNS), 58–59 (DI), 80–84 (FAGLK), N99, S124, Y149, K153, and F178 each bind NAD(+). 2 residues coordinate substrate: S124 and Y149. Y149 acts as the Proton acceptor in catalysis. Substrate is bound by residues N179, 199-200 (NL), 216-218 (AVF), R231, 292-295 (RDGD), and Y299.

Belongs to the NAD(P)-dependent epimerase/dehydratase family. As to quaternary structure, homodimer. Requires NAD(+) as cofactor.

It catalyses the reaction UDP-alpha-D-glucose = UDP-alpha-D-galactose. It functions in the pathway carbohydrate metabolism; galactose metabolism. Functionally, involved in the metabolism of galactose. Catalyzes the conversion of UDP-galactose (UDP-Gal) to UDP-glucose (UDP-Glc) through a mechanism involving the transient reduction of NAD. In Salmonella typhimurium (strain LT2 / SGSC1412 / ATCC 700720), this protein is UDP-glucose 4-epimerase (galE).